The chain runs to 1212 residues: MAACRAQPPTSEQAWLEAAQTFIQETLCPAGKEVDKELTRSVIACVKETWLSQGENQDLTLPFSYSFVSVQSLKTHQRLPCCSHLSWSQSAYQAWTRGGRPGDGVLPREQLILLGTLVDLLGDSEQECRSGSLYVRDNTGTLDCELIDLDLSWLGHLFLFPSWSYLPSAKRNSLGEGHLELWGTPVPVFPLTVSPGPLIPIPVLYPEKASHLLRYRKKSSIKEINLAGKLVHLSALIITQNKRYFIMTLGELAQAGSQVSIIVQIPAQMVWHRVLRPGRAYVLTKLQVTKTRIHLSCIWTTIPSSTLKPLRPGYVQELELDLEFSKADLKPPPQPTSSKDSRGQEGLVRASKVLHYLGTVTAVLHESAGLYILDGQLILCLAYQKIHGLRRVIRPGVCLELRDVHLLQAVGGATTKPVLALCLHGTVRLQGFSCLKPLTLPSSKVYGASLYEQLVWKCQLGLPLYLWAAKTLEDLIYKLCPHVLRCHQFLKQPSPGKPSLGLQLLAPSWDVLIPPGSPMRHAYSEILEEPHNCPLQKYTPLQTPYSFPTMLALAEEGQHRAWATFDPKAMLPLPEASHLTSCQLNRHLAWSWVCLPSCVFQPAQVLLGVLVASSRKGCLELRDLRGSLPCIPLTESSQPLIDPNLVGCLVRVEKFQLVVEREVRSSFPSWEEMGMARFIQKKQARVYVQFYLADALILPVPRPTFGSEPSQTASSCPEGPHLGQSRLFLLSHKEALMKRNFCLLPGDSSQPAKPTLSFHVSGTWLCGTQRKEGSGWSPPESLAVESKDQKVFLIFLGSSVRWFPFLYPNQVYRLVASGPSQTPVFETEGSAGTSRRPLELADCGSCLTVQEEWTLELGSSQDIPNVLEVPRTLPESSLAQLLGDNSPDSLVSFSAEILSRILCEPPLALRRMKPGNAGAIKTGVKLTVALEMDDCEYPPHLDIYIEDPQLPPQIGLLPGARVHFSQLEKRISRSNIVYCCFRSSTSVQVLSFPPETKASAPLPHIYLAELLQGDRPPFQATTSCHIVYVLSLQILWVCAHCTSICPQGKCSRRDPSCPSQRAVSQANIRLLVEDGTAEATVICRNHLVARALGLSPSEWSSILEHARGPGRVALQFTGLGGQTESASKTHEPLTLLLRTLCTSPFVLRPVKLSFALERRPTDISPREPSRLQQFQCGELPLLTRVNPRLRLVCLSLQEPELPNPPQASAASS.

It belongs to the CTC1 family. Component of the CST complex, composed of TEN1/C17orf106, CTC1/C17orf68 and STN1; in the complex interacts directly with STN1. Interacts with ACD and POT1.

It localises to the nucleus. The protein localises to the chromosome. It is found in the telomere. In terms of biological role, component of the CST complex proposed to act as a specialized replication factor promoting DNA replication under conditions of replication stress or natural replication barriers such as the telomere duplex. The CST complex binds single-stranded DNA with high affinity in a sequence-independent manner, while isolated subunits bind DNA with low affinity by themselves. Initially the CST complex has been proposed to protect telomeres from DNA degradation. However, the CST complex has been shown to be involved in several aspects of telomere replication. The CST complex inhibits telomerase and is involved in telomere length homeostasis; it is proposed to bind to newly telomerase-synthesized 3' overhangs and to terminate telomerase action implicating the association with the ACD:POT1 complex thus interfering with its telomerase stimulation activity. The CST complex is also proposed to be involved in fill-in synthesis of the telomeric C-strand probably implicating recruitment and activation of DNA polymerase alpha. The CST complex facilitates recovery from many forms of exogenous DNA damage; seems to be involved in the re-initiation of DNA replication at repaired forks and/or dormant origins. Involved in telomere maintenance. Involved in genome stability. May be in involved in telomeric C-strand fill-in during late S/G2 phase. The chain is CST complex subunit CTC1 (Ctc1) from Mus musculus (Mouse).